Here is a 564-residue protein sequence, read N- to C-terminus: Kelch repeat and BTB domain-containing protein 1 (564 aa).

In terms of domain architecture, BTB spans 21–88 (CDINIVINDE…IYGIPLSLTN (68 aa)). Kelch repeat units follow at residues 252-297 (IELI…VLDN), 298-346 (IIYM…ADDE), 347-395 (YIYC…MLNG), 397-441 (IYVI…VHDG), 442-492 (KIYI…SAHN), and 494-539 (LYVG…CEPI).

This sequence belongs to the poxviruses Kelch family. As to quaternary structure, interacts (via BTB domain) with host CUL3.

It is found in the host cytoplasm. Probable substrate-specific adapter of CUL3-containing E3 ubiquitin-protein ligases which mediate the ubiquitination and subsequent proteasomal degradation of host target proteins. The protein is Kelch repeat and BTB domain-containing protein 1 (KBTB1) of Homo sapiens (Human).